Consider the following 445-residue polypeptide: MRRRRKMEAGAAARAWSLLWLLLPLLGPVCASGPRTLVLLDNLNLRETHSLFFRSLKDRAFELTFKTADDPSLSLIKYGEFLYDNLIIFSPSVEDFGGNINVETISTFIDGGGSVLVAASSDIGDPLRELGSECGIEFDEEKTAVIDHHNYDVSDLGQHTLIVADPENLLKAPTIVGRSSLNPILFRGVGMVADPDNPLVLDILTGSSTSYSFFPDKPITQYPHAVGKNTLLIAGLQARNNARVVFSGSLDFFSDAFFNSAVQKAAPGSQRYSQTGNYELAVALSRWVFKEEGVLRVGPVSHHRVGETAPPNAYTVTDLVEYSIVIEQLSNGRWVPFDGDDIQLEFVRIDPFVRTFLKKKGGKYSVQFKLPDVYGVFQFKVDYNRLGYTHLHSSTQVSVRPLQHTQYERFIPSAYPYYASAFSMMLGLFIFSTVFLHMKEKEKSD.

The first 32 residues, 1-32 (MRRRRKMEAGAAARAWSLLWLLLPLLGPVCAS), serve as a signal peptide directing secretion. Residues 33 to 415 (GPRTLVLLDN…QYERFIPSAY (383 aa)) are Lumenal-facing. The helical transmembrane segment at 416-436 (PYYASAFSMMLGLFIFSTVFL) threads the bilayer. The Cytoplasmic segment spans residues 437–445 (HMKEKEKSD).

This sequence belongs to the DDOST 48 kDa subunit family. As to quaternary structure, component of the oligosaccharyltransferase (OST) complex. OST exists in two different complex forms which contain common core subunits RPN1, RPN2, OST48, OST4, DAD1 and TMEM258, either STT3A or STT3B as catalytic subunits, and form-specific accessory subunits. STT3A complex assembly occurs through the formation of 3 subcomplexes. Subcomplex 1 contains RPN1 and TMEM258, subcomplex 2 contains the STT3A-specific subunits STT3A, DC2/OSTC, and KCP2 as well as the core subunit OST4, and subcomplex 3 contains RPN2, DAD1, and OST48. The STT3A complex can form stable complexes with the Sec61 complex or with both the Sec61 and TRAP complexes. Interacts with SMIM22.

The protein localises to the endoplasmic reticulum. The protein resides in the endoplasmic reticulum membrane. The protein operates within protein modification; protein glycosylation. Its function is as follows. Subunit of the oligosaccharyl transferase (OST) complex that catalyzes the initial transfer of a defined glycan (Glc(3)Man(9)GlcNAc(2) in eukaryotes) from the lipid carrier dolichol-pyrophosphate to an asparagine residue within an Asn-X-Ser/Thr consensus motif in nascent polypeptide chains, the first step in protein N-glycosylation. N-glycosylation occurs cotranslationally and the complex associates with the Sec61 complex at the channel-forming translocon complex that mediates protein translocation across the endoplasmic reticulum (ER). All subunits are required for a maximal enzyme activity. Required for the assembly of both SST3A- and SS3B-containing OST complexes. The protein is Dolichyl-diphosphooligosaccharide--protein glycosyltransferase 48 kDa subunit of Canis lupus familiaris (Dog).